The chain runs to 319 residues: Lambda-crystallin homolog (319 aa).

An N-acetylalanine modification is found at Ala-2. Ser-3 is modified (phosphoserine). Residues 16-17 (LI), Asp-36, Glu-97, and Lys-102 each bind NAD(+).

It belongs to the 3-hydroxyacyl-CoA dehydrogenase family. As to quaternary structure, homodimer. Widely expressed, with highest levels in liver. Undetectable in skeletal muscle.

Its subcellular location is the cytoplasm. It carries out the reaction L-gulonate + NAD(+) = 3-dehydro-L-gulonate + NADH + H(+). Inhibited by malonate. In terms of biological role, has high L-gulonate 3-dehydrogenase activity. It also exhibits low dehydrogenase activity toward L-3-hydroxybutyrate (HBA) and L-threonate. In Mus musculus (Mouse), this protein is Lambda-crystallin homolog (Cryl1).